A 533-amino-acid chain; its full sequence is MAKKRIAVIGAGASGLTCIKCCLEEGLEPVCFERSGDIGGLWRFQEAPEEGRASIYQSVVINTSKEMMCFSDYPIPDHYPNYMHNSQVLEYFRMYAKEFDLLKYIQFKTTVCSVKKQPDFSTSGQWQVVTECEGKQQVDVFDGVLVCTGHHTDAHLPLESFPGIEKFKGKYFHSRDYKNPVEFTGKRVIVIGIGNSGGDLAVEISHTAKQVFLSTRRGAWILNRVGKHGYPIDLLLSSRIMYYLSRICGPSLKNNYMEKQMNQRFDHEMFGLKPKHRALSQHPTVNDDLPNRIIAGLVKVKGNVKEFTETAAVFEDGSREDGIDVVIFATGYSFAFPFLEDSVKVVKNKVSLYKKVFPPNLEKPTLAIIGLIQPLGAIMPISELQGRWATQVFKGLKKLPSQSEMMAEINKAREEMAKRYVDSQRHTIQGDYIDTMEEIADLVGVRPNILPLVFTDPRLALRLLLGPCTPVQYRLQGPGKWAGARKTILTTEDRVRKPLMTRVVERDSSGGSLVTVRVLMLAVAFFAVILAYF.

Position 5 is a dimethylated arginine (Arg-5). Residues 10–14 (GAGAS), Glu-33, and 41–42 (LW) contribute to the FAD site. Position 54 is a phosphoserine (Ser-54). Tyr-56 carries the post-translational modification Phosphotyrosine. Ser-58 carries the phosphoserine modification. 62 to 63 (NT) contributes to the FAD binding site. 196-199 (SGGD) is a binding site for NADP(+). A Phosphoserine modification is found at Ser-280. Phosphothreonine is present on Thr-284. At Ser-401 the chain carries Phosphoserine. Residues 513–533 (LVTVRVLMLAVAFFAVILAYF) traverse the membrane as a helical segment.

Belongs to the FMO family. Requires FAD as cofactor. In terms of tissue distribution, expressed in liver (at protein level). Expressed in the mucosal epithelium of the gastrointestinal tract.

It is found in the microsome membrane. The protein localises to the endoplasmic reticulum membrane. The enzyme catalyses N,N-dimethylaniline + NADPH + O2 + H(+) = N,N-dimethylaniline N-oxide + NADP(+) + H2O. It catalyses the reaction NADPH + O2 + H(+) = H2O2 + NADP(+). It carries out the reaction heptan-2-one + NADPH + O2 + H(+) = pentyl acetate + NADP(+) + H2O. The catalysed reaction is octan-3-one + NADPH + O2 + H(+) = pentyl propanoate + NADP(+) + H2O. The enzyme catalyses octan-3-one + NADPH + O2 + H(+) = ethyl hexanoate + NADP(+) + H2O. It catalyses the reaction hexan-3-one + NADPH + O2 + H(+) = ethyl butanoate + NADP(+) + H2O. It carries out the reaction hexan-3-one + NADPH + O2 + H(+) = propyl propanoate + NADP(+) + H2O. The catalysed reaction is heptan-4-one + NADPH + O2 + H(+) = propyl butanoate + NADP(+) + H2O. The enzyme catalyses (2E)-geranial + NADPH + O2 + H(+) = (1E)-2,6-dimethylhepta-1,5-dien-1-yl formate + NADP(+) + H2O. It catalyses the reaction sulcatone + NADPH + O2 + H(+) = 4-methylpent-3-en-1-yl acetate + NADP(+) + H2O. Acts as a Baeyer-Villiger monooxygenase on a broad range of substrates. Catalyzes the insertion of an oxygen atom into a carbon-carbon bond adjacent to a carbonyl, which converts ketones to esters. Active on diverse carbonyl compounds, whereas soft nucleophiles are mostly non- or poorly reactive. In contrast with other forms of FMO it is non- or poorly active on 'classical' substrates such as drugs, pesticides, and dietary components containing soft nucleophilic heteroatoms. Able to oxidize drug molecules bearing a carbonyl group on an aliphatic chain, such as nabumetone and pentoxifylline. Also, in the absence of substrates, shows slow but yet significant NADPH oxidase activity. Acts as a positive modulator of cholesterol biosynthesis as well as glucose homeostasis, promoting metabolic aging via pleiotropic effects. The sequence is that of Flavin-containing monooxygenase 5 from Mus musculus (Mouse).